The primary structure comprises 420 residues: Calsequestrin-1 (420 aa).

The signal sequence occupies residues 1-22; that stretch reads MKGPWLVLAALCLSLANLGPRG. Asn338 carries an N-linked (GlcNAc...) asparagine glycan. The tract at residues 369–420 is disordered; sequence LEGEVNTEDDDDDDDDDDDDDDDDDDDDDDDDDDDDDDDDDDDDDDDDDDDD.

The protein belongs to the calsequestrin family. As to quaternary structure, monomer; increases in response to a depletion of intracellular calcium. Homodimer. Homotetramer and homopolymer. Can form linear homooligomers. Ca(2+) ions promote oligomerization. Detected in skeletal muscle (at protein level). Detected in skeletal muscle.

The protein resides in the endoplasmic reticulum. It localises to the sarcoplasmic reticulum. It is found in the sarcoplasmic reticulum lumen. The protein localises to the sarcoplasmic reticulum membrane. Its subcellular location is the mitochondrion matrix. Calsequestrin is a high-capacity, moderate affinity, calcium-binding protein and thus acts as an internal calcium store in muscle. Calcium ions are bound by clusters of acidic residues at the protein surface, often at the interface between subunits. Can bind around 80 Ca(2+) ions. Regulates the release of lumenal Ca(2+) via the calcium release channel RYR1; this plays an important role in triggering muscle contraction. Negatively regulates store-operated Ca(2+) entry (SOCE) activity. In Pelophylax lessonae (Pool frog), this protein is Calsequestrin-1.